The chain runs to 399 residues: Tryptophan synthase beta chain (399 aa).

N6-(pyridoxal phosphate)lysine is present on Lys92.

The protein belongs to the TrpB family. Tetramer of two alpha and two beta chains. The cofactor is pyridoxal 5'-phosphate.

The catalysed reaction is (1S,2R)-1-C-(indol-3-yl)glycerol 3-phosphate + L-serine = D-glyceraldehyde 3-phosphate + L-tryptophan + H2O. The protein operates within amino-acid biosynthesis; L-tryptophan biosynthesis; L-tryptophan from chorismate: step 5/5. Its function is as follows. The beta subunit is responsible for the synthesis of L-tryptophan from indole and L-serine. In Thiobacillus denitrificans (strain ATCC 25259 / T1), this protein is Tryptophan synthase beta chain.